The chain runs to 174 residues: Ribosome maturation factor RimM (174 aa).

One can recognise a PRC barrel domain in the interval 96-170 (PDEFYDHELE…YVVIDPPEGL (75 aa)).

This sequence belongs to the RimM family. As to quaternary structure, binds ribosomal protein uS19.

Its subcellular location is the cytoplasm. Functionally, an accessory protein needed during the final step in the assembly of 30S ribosomal subunit, possibly for assembly of the head region. Essential for efficient processing of 16S rRNA. May be needed both before and after RbfA during the maturation of 16S rRNA. It has affinity for free ribosomal 30S subunits but not for 70S ribosomes. This Nocardia farcinica (strain IFM 10152) protein is Ribosome maturation factor RimM.